A 470-amino-acid chain; its full sequence is ADAM DEC1 (470 aa).

Positions 1–30 (MLRGISQLPAVATMSWVLLPVLWLIVQTQA) are cleaved as a signal peptide. Residues 31 to 205 (IAIKQTPELT…QGPIRISRSL (175 aa)) constitute a propeptide that is removed on maturation. Asparagine 61 is a glycosylation site (N-linked (GlcNAc...) asparagine). A disordered region spans residues 173–200 (FTSNQEEQDPANHTCGVKSTDGKQGPIR). N-linked (GlcNAc...) (complex) asparagine glycosylation is present at asparagine 184. The Peptidase M12B domain maps to 218 to 412 (KYIDLYLVLD…QKPKCLLQAP (195 aa)). The N-linked (GlcNAc...) asparagine glycan is linked to asparagine 237. Disulfide bonds link cysteine 328-cysteine 407 and cysteine 369-cysteine 374. Position 352 (histidine 352) interacts with Zn(2+). The active site involves glutamate 353. Zn(2+)-binding residues include histidine 356 and aspartate 362. In terms of domain architecture, Disintegrin spans 420–470 (TPVCGNHLLEVGEDCDCGSPKECTNLCCEALTCKLKPGTDCGGDAPNHTTE). A glycan (N-linked (GlcNAc...) asparagine) is linked at asparagine 466.

It depends on Zn(2+) as a cofactor. As to expression, expressed highly in the small intestine and appendix, moderately in lymph node, mucosal lining of the colon, thymus, spleen and very weakly in the bone marrow. Predominantly expressed in dendritic cells (DC) of the germinal center. Weakly expressed in monocyte and highly expressed in macrophage. Absent in immature DC.

The protein localises to the secreted. May play an important role in the control of the immune response and during pregnancy. In Homo sapiens (Human), this protein is ADAM DEC1 (ADAMDEC1).